Here is a 501-residue protein sequence, read N- to C-terminus: Na(+)/H(+) antiporter NhaB (501 aa).

The next 11 helical transmembrane spans lie at 24–44 (VILL…PGVA), 46–66 (WLLI…YPLL), 90–110 (VLTN…IYFM), 145–165 (FLDA…FFSV), 206–226 (LLMH…VGEP), 239–259 (FAGF…AGLA), 302–319 (ALWI…GLAF), 351–371 (FQES…VAVI), 395–415 (MFFI…VATV), 450–470 (VATP…IAPL), and 478–498 (MVIM…YMVT).

The protein belongs to the NhaB Na(+)/H(+) (TC 2.A.34) antiporter family.

It is found in the cell inner membrane. The enzyme catalyses 2 Na(+)(in) + 3 H(+)(out) = 2 Na(+)(out) + 3 H(+)(in). Functionally, na(+)/H(+) antiporter that extrudes sodium in exchange for external protons. The protein is Na(+)/H(+) antiporter NhaB of Marinobacter nauticus (strain ATCC 700491 / DSM 11845 / VT8) (Marinobacter aquaeolei).